Consider the following 216-residue polypeptide: Cytochrome c biogenesis ATP-binding export protein CcmA (216 aa).

The ABC transporter domain maps to 5 to 216 (ISVDTLLSAS…RKIRLDYRFV (212 aa)). 43-50 (GPNGAGKT) is an ATP binding site.

This sequence belongs to the ABC transporter superfamily. CcmA exporter (TC 3.A.1.107) family. As to quaternary structure, the complex is composed of two ATP-binding proteins (CcmA) and two transmembrane proteins (CcmB).

Its subcellular location is the cell inner membrane. It carries out the reaction heme b(in) + ATP + H2O = heme b(out) + ADP + phosphate + H(+). Part of the ABC transporter complex CcmAB involved in the biogenesis of c-type cytochromes; once thought to export heme, this seems not to be the case, but its exact role is uncertain. Responsible for energy coupling to the transport system. The polypeptide is Cytochrome c biogenesis ATP-binding export protein CcmA (Shewanella oneidensis (strain ATCC 700550 / JCM 31522 / CIP 106686 / LMG 19005 / NCIMB 14063 / MR-1)).